Consider the following 252-residue polypeptide: Imidazole glycerol phosphate synthase subunit HisF (252 aa).

Catalysis depends on residues aspartate 11 and aspartate 130.

It belongs to the HisA/HisF family. Heterodimer of HisH and HisF.

It is found in the cytoplasm. The enzyme catalyses 5-[(5-phospho-1-deoxy-D-ribulos-1-ylimino)methylamino]-1-(5-phospho-beta-D-ribosyl)imidazole-4-carboxamide + L-glutamine = D-erythro-1-(imidazol-4-yl)glycerol 3-phosphate + 5-amino-1-(5-phospho-beta-D-ribosyl)imidazole-4-carboxamide + L-glutamate + H(+). Its pathway is amino-acid biosynthesis; L-histidine biosynthesis; L-histidine from 5-phospho-alpha-D-ribose 1-diphosphate: step 5/9. Its function is as follows. IGPS catalyzes the conversion of PRFAR and glutamine to IGP, AICAR and glutamate. The HisF subunit catalyzes the cyclization activity that produces IGP and AICAR from PRFAR using the ammonia provided by the HisH subunit. The polypeptide is Imidazole glycerol phosphate synthase subunit HisF (Hydrogenobaculum sp. (strain Y04AAS1)).